Reading from the N-terminus, the 215-residue chain is Osteoclast-stimulating factor 1 (215 aa).

An N-acetylserine modification is found at Ser-2. The SH3 domain occupies 12–71 (GQVKVFRALYTFEPRTPDELYFEEGDIIYITDMSDTSWWKGTCKGRTGLIPSNYVAEQAE). ANK repeat units follow at residues 72 to 101 (SIDN…GVNG), 105 to 135 (AGST…ELNQ), and 139 to 168 (LGDT…RTDL). Residues 192 to 215 (KQQGTDGARTLSNAEDYLDDEDSD) are disordered. At Thr-201 the chain carries Phosphothreonine. 2 positions are modified to phosphoserine: Ser-203 and Ser-214.

In terms of assembly, interacts with C-SRC and SMN1. Interacts with FASLG.

It localises to the cytoplasm. Functionally, induces bone resorption, acting probably through a signaling cascade which results in the secretion of factor(s) enhancing osteoclast formation and activity. This is Osteoclast-stimulating factor 1 (Ostf1) from Mus musculus (Mouse).